The following is a 333-amino-acid chain: Cytochrome c oxidase assembly protein COX18, mitochondrial (333 aa).

A helical transmembrane segment spans residues 168–188 (FKATVLVWIQLPMWIFMSFAL). Residues 189-223 (RNLSTGAAHSEGFSVQEQLATGGILWFPDLTAPDS) are Mitochondrial matrix-facing. The chain crosses the membrane as a helical span at residues 224–244 (TWILPISVGVINLLIVEICAL). Residues 245 to 262 (QKIGMSRFQTYITYFVRA) are Mitochondrial intermembrane-facing. A helical membrane pass occupies residues 263–283 (MSVLMIPIAATVPSSIVLYWL). The Mitochondrial matrix segment spans residues 284–333 (CSSFVGLSQNLLLRSPGFRQLCRIPSTKSDSETPYKDIFAAFNTKFISRK).

It belongs to the OXA1/ALB3/YidC family. In terms of assembly, found in a complex with TMEM177, COA6, MT-CO2/COX2, COX20, SCO1 and SCO2. Interacts transiently with MT-CO2/COX2 during its maturation. Interacts with COX20 in a MT-CO2/COX2-dependent manner.

It is found in the mitochondrion inner membrane. Its function is as follows. Mitochondrial membrane insertase required for the translocation of the C-terminus of cytochrome c oxidase subunit II (MT-CO2/COX2) across the mitochondrial inner membrane. Plays a role in MT-CO2/COX2 maturation following the COX20-mediated stabilization of newly synthesized MT-CO2/COX2 protein and before the action of the metallochaperones SCO1/2. Essential for the assembly and stability of the mitochondrial respiratory chain complex IV (also known as cytochrome c oxidase). The protein is Cytochrome c oxidase assembly protein COX18, mitochondrial (COX18) of Homo sapiens (Human).